A 198-amino-acid chain; its full sequence is Dual specificity protein phosphatase 14 (198 aa).

Residues 26 to 167 (GIAQITSSLF…LIDYERQLFG (142 aa)) enclose the Tyrosine-protein phosphatase domain. Residue Cys-111 is the Phosphocysteine intermediate of the active site.

It belongs to the protein-tyrosine phosphatase family. Non-receptor class dual specificity subfamily. As to quaternary structure, interacts with CD28.

It catalyses the reaction O-phospho-L-tyrosyl-[protein] + H2O = L-tyrosyl-[protein] + phosphate. The enzyme catalyses O-phospho-L-seryl-[protein] + H2O = L-seryl-[protein] + phosphate. It carries out the reaction O-phospho-L-threonyl-[protein] + H2O = L-threonyl-[protein] + phosphate. In terms of biological role, involved in the inactivation of MAP kinases. Dephosphorylates ERK, JNK and p38 MAP-kinases. Plays a negative role in TCR signaling by dephosphorylating MAP3K7 adapter TAB1 leading to its inactivation. The protein is Dual specificity protein phosphatase 14 (DUSP14) of Bos taurus (Bovine).